A 139-amino-acid polypeptide reads, in one-letter code: Prostate-associated microseminoprotein (139 aa).

A signal peptide spans 1–35; sequence MALRMLWAGQAKGILGGWRTICLVVSLFLQHPGVS. 5 disulfides stabilise this stretch: Cys38/Cys78, Cys46/Cys69, Cys64/Cys100, Cys67/Cys77, and Cys91/Cys114. Residues 116–139 form a disordered region; that stretch reads GGGPDLEWGSANTPAPGASAPHSS.

This sequence belongs to the beta-microseminoprotein family.

Its subcellular location is the secreted. Acts as a ligand for C-C chemokine receptor CCR2. Signals through binding and activation of CCR2 and induces a strong chemotactic response and mobilization of intracellular calcium ions. Exhibits a chemotactic activity for monocytes and lymphocytes but not neutrophils. This is Prostate-associated microseminoprotein (Msmp) from Mus musculus (Mouse).